The following is a 308-amino-acid chain: Ectoine dioxygenase (308 aa).

Gln-131 is an L-ectoine binding site. Residue Lys-137 participates in 2-oxoglutarate binding. His-148, Asp-150, and His-249 together coordinate Fe cation.

It belongs to the PhyH family. EctD subfamily. In terms of assembly, homodimer. Requires Fe(2+) as cofactor.

The enzyme catalyses L-ectoine + 2-oxoglutarate + O2 = 5-hydroxyectoine + succinate + CO2. Its function is as follows. Involved in the biosynthesis of 5-hydroxyectoine, called compatible solute, which helps organisms to survive extreme osmotic stress by acting as a highly soluble organic osmolyte. Catalyzes the 2-oxoglutarate-dependent selective hydroxylation of L-ectoine to yield (4S,5S)-5-hydroxyectoine. The polypeptide is Ectoine dioxygenase (Bordetella bronchiseptica (strain ATCC BAA-588 / NCTC 13252 / RB50) (Alcaligenes bronchisepticus)).